The sequence spans 465 residues: Cytochrome P450 85A1 (465 aa).

A helical membrane pass occupies residues 2–22 (GAMMVMMGLLLIIVSLCSALL). Cys415 provides a ligand contact to heme.

Belongs to the cytochrome P450 family. Heme serves as cofactor. In terms of tissue distribution, mainly expressed in apical shoots, hypocotyls, siliques and roots. Also present in the female gametophyte.

The protein resides in the membrane. It carries out the reaction 6-deoxoteasterone + reduced [NADPH--hemoprotein reductase] + O2 = 6alpha-hydroxyteasterone + oxidized [NADPH--hemoprotein reductase] + H2O + H(+). It catalyses the reaction 6alpha-hydroxytyphasterol + reduced [NADPH--hemoprotein reductase] + O2 = teasterone + oxidized [NADPH--hemoprotein reductase] + 2 H2O + H(+). The enzyme catalyses 3-dehydro-6-deoxoteasterone + reduced [NADPH--hemoprotein reductase] + O2 = 3-dehydro-6alpha-hydroxyteasterone + oxidized [NADPH--hemoprotein reductase] + H2O + H(+). The catalysed reaction is 3-dehydro-6alpha-hydroxyteasterone + reduced [NADPH--hemoprotein reductase] + O2 = 3-dehydroteasterone + oxidized [NADPH--hemoprotein reductase] + 2 H2O + H(+). It carries out the reaction 6-deoxotyphasterol + reduced [NADPH--hemoprotein reductase] + O2 = 6alpha-hydroxytyphasterol + oxidized [NADPH--hemoprotein reductase] + H2O + H(+). It catalyses the reaction 6alpha-hydroxytyphasterol + reduced [NADPH--hemoprotein reductase] + O2 = typhasterol + oxidized [NADPH--hemoprotein reductase] + 2 H2O + H(+). The enzyme catalyses 6-deoxocastasterone + reduced [NADPH--hemoprotein reductase] + O2 = 6alpha-hydroxycastasterone + oxidized [NADPH--hemoprotein reductase] + H2O + H(+). The catalysed reaction is 6alpha-hydroxycastasterone + reduced [NADPH--hemoprotein reductase] + O2 = castasterone + oxidized [NADPH--hemoprotein reductase] + 2 H2O + H(+). It carries out the reaction 6-deoxocastasterone + 2 reduced [NADPH--hemoprotein reductase] + 2 O2 = castasterone + 2 oxidized [NADPH--hemoprotein reductase] + 3 H2O + 2 H(+). It catalyses the reaction 6-deoxoteasterone + 2 reduced [NADPH--hemoprotein reductase] + 2 O2 = teasterone + 2 oxidized [NADPH--hemoprotein reductase] + 3 H2O + 2 H(+). The enzyme catalyses 6-deoxotyphasterol + 2 reduced [NADPH--hemoprotein reductase] + 2 O2 = typhasterol + 2 oxidized [NADPH--hemoprotein reductase] + 3 H2O + 2 H(+). The catalysed reaction is 3-dehydro-6-deoxoteasterone + 2 reduced [NADPH--hemoprotein reductase] + 2 O2 = 3-dehydroteasterone + 2 oxidized [NADPH--hemoprotein reductase] + 3 H2O + 2 H(+). It participates in plant hormone biosynthesis; brassinosteroid biosynthesis. Functionally, catalyzes the C6-oxidation step in brassinosteroids biosynthesis. Converts 6-deoxocastasterone (6-deoxoCS) to castasterone (CS). May also convert 6-deoxoteasterone (6-deoxoTE) to teasterone (TE), 3-dehydro-6-deoxoteasterone (6-deoxo3DT, 6-deoxo-3-DHT) to 3-dehydroteasterone (3DT, 3-DHT), and 6-deoxotyphasterol (6-deoxoTY) to typhasterol (TY). Required for the initiation of female gametogenesis (megagametogenesis). The chain is Cytochrome P450 85A1 from Arabidopsis thaliana (Mouse-ear cress).